Reading from the N-terminus, the 428-residue chain is Aspartate--tRNA(Asp) ligase (428 aa).

An L-aspartate-binding site is contributed by glutamate 166. The interval 188-191 (QLYK) is aspartate. Arginine 210 provides a ligand contact to L-aspartate. ATP is bound by residues 210-212 (RAE), 218-220 (RHL), and glutamate 351. The Mg(2+) site is built by glutamate 351 and serine 354. The L-aspartate site is built by serine 354 and arginine 358. 399–402 (GLER) serves as a coordination point for ATP.

This sequence belongs to the class-II aminoacyl-tRNA synthetase family. Type 2 subfamily. Homodimer. Mg(2+) serves as cofactor.

It is found in the cytoplasm. The enzyme catalyses tRNA(Asp) + L-aspartate + ATP = L-aspartyl-tRNA(Asp) + AMP + diphosphate. In terms of biological role, catalyzes the attachment of L-aspartate to tRNA(Asp) in a two-step reaction: L-aspartate is first activated by ATP to form Asp-AMP and then transferred to the acceptor end of tRNA(Asp). This chain is Aspartate--tRNA(Asp) ligase, found in Thermoplasma volcanium (strain ATCC 51530 / DSM 4299 / JCM 9571 / NBRC 15438 / GSS1).